Here is a 458-residue protein sequence, read N- to C-terminus: Fasciclin-like arabinogalactan protein 17 (458 aa).

Residues 1-30 (MDRRIYGGSAVIHLFLFFSVLIFSAASALS) form the signal peptide. Positions 43–184 (NSNSVLVALL…GLIHGIERLL (142 aa)) constitute an FAS1 1 domain. N80 carries N-linked (GlcNAc...) asparagine glycosylation. The segment at 207 to 262 (PEGAPEVDPRTNRLKKPAAPVPAGSPPALPIQSAMAPGPSLAPAPAPGPGGKQHHF) is disordered. Pro residues predominate over residues 225–235 (APVPAGSPPAL). Residues 268 to 411 (VKDFIHTLLH…ISVQGIDGVL (144 aa)) enclose the FAS1 2 domain. An N-linked (GlcNAc...) asparagine glycan is attached at N290.

This sequence belongs to the fasciclin-like AGP family.

The protein localises to the secreted. Its function is as follows. May be a cell surface adhesion protein. This chain is Fasciclin-like arabinogalactan protein 17 (FLA17), found in Arabidopsis thaliana (Mouse-ear cress).